The primary structure comprises 407 residues: Phosphopentomutase (407 aa).

The Mn(2+) site is built by Asp11, Asp305, His310, Asp346, His347, and His358.

This sequence belongs to the phosphopentomutase family. Mn(2+) serves as cofactor.

It localises to the cytoplasm. It carries out the reaction 2-deoxy-alpha-D-ribose 1-phosphate = 2-deoxy-D-ribose 5-phosphate. The enzyme catalyses alpha-D-ribose 1-phosphate = D-ribose 5-phosphate. Its pathway is carbohydrate degradation; 2-deoxy-D-ribose 1-phosphate degradation; D-glyceraldehyde 3-phosphate and acetaldehyde from 2-deoxy-alpha-D-ribose 1-phosphate: step 1/2. In terms of biological role, isomerase that catalyzes the conversion of deoxy-ribose 1-phosphate (dRib-1-P) and ribose 1-phosphate (Rib-1-P) to deoxy-ribose 5-phosphate (dRib-5-P) and ribose 5-phosphate (Rib-5-P), respectively. The chain is Phosphopentomutase from Legionella pneumophila (strain Lens).